A 260-amino-acid polypeptide reads, in one-letter code: NAD-dependent protein deacetylase (260 aa).

Residues 9 to 260 (DDIDGETLDA…QVLPAIVERL (252 aa)) enclose the Deacetylase sirtuin-type domain. NAD(+) is bound by residues A35, T39, F46, R47, Q114, I116, D117, and H132. F46 contributes to the nicotinamide binding site. Residues I116 and D117 each contribute to the nicotinamide site. The active-site Proton acceptor is H132. Residues C140, C143, C166, and C168 each coordinate Zn(2+). NAD(+)-binding residues include S206, S207, N231, D248, and V249.

The protein belongs to the sirtuin family. Class U subfamily. Requires Zn(2+) as cofactor.

The protein resides in the cytoplasm. The enzyme catalyses N(6)-acetyl-L-lysyl-[protein] + NAD(+) + H2O = 2''-O-acetyl-ADP-D-ribose + nicotinamide + L-lysyl-[protein]. Functionally, NAD-dependent protein deacetylase which modulates the activities of several enzymes which are inactive in their acetylated form. Deacetylates the N-terminal lysine residue of Alba, the major archaeal chromatin protein and that, in turn, increases Alba's DNA binding affinity, thereby repressing transcription. This is NAD-dependent protein deacetylase from Haloarcula marismortui (strain ATCC 43049 / DSM 3752 / JCM 8966 / VKM B-1809) (Halobacterium marismortui).